We begin with the raw amino-acid sequence, 178 residues long: MALKELFDRDWQELESEGILFSNLEKLVAWGRSNSLWPATFGLACCAIEMMSSTNARNDMARFGSEVFRASPRQADVMIVAGRLSKKMAPVMRRVYDQMPDPKWVIAMGACASSGGMFNNYAIVQNVDSVVPVDIYVPGCPPRPEALIYAVMQLQKKVRGEAFDQLGHQLPMVDAWTR.

[4Fe-4S] cluster-binding residues include C45, C46, C111, and C140.

This sequence belongs to the complex I 20 kDa subunit family. As to quaternary structure, NDH-1 is composed of 15 different subunits. Subunits NuoB, C, D, E, F, and G constitute the peripheral sector of the complex. [4Fe-4S] cluster serves as cofactor.

It is found in the cell membrane. It catalyses the reaction a quinone + NADH + 5 H(+)(in) = a quinol + NAD(+) + 4 H(+)(out). In terms of biological role, NDH-1 shuttles electrons from NADH, via FMN and iron-sulfur (Fe-S) centers, to quinones in the respiratory chain. The immediate electron acceptor for the enzyme in this species is believed to be a menaquinone. Couples the redox reaction to proton translocation (for every two electrons transferred, four hydrogen ions are translocated across the cytoplasmic membrane), and thus conserves the redox energy in a proton gradient. The polypeptide is NADH-quinone oxidoreductase subunit B (Deinococcus deserti (strain DSM 17065 / CIP 109153 / LMG 22923 / VCD115)).